A 241-amino-acid polypeptide reads, in one-letter code: Geranylgeranylglyceryl phosphate synthase (241 aa).

Positions 26 and 52 each coordinate Mg(2+). Sn-glycerol 1-phosphate-binding positions include 172-178 (YFEAGSG), 204-205 (GG), and 226-227 (GT).

This sequence belongs to the GGGP/HepGP synthase family. Group II subfamily. Mg(2+) serves as cofactor.

It is found in the cytoplasm. The enzyme catalyses sn-glycerol 1-phosphate + (2E,6E,10E)-geranylgeranyl diphosphate = sn-3-O-(geranylgeranyl)glycerol 1-phosphate + diphosphate. The protein operates within membrane lipid metabolism; glycerophospholipid metabolism. Prenyltransferase that catalyzes the transfer of the geranylgeranyl moiety of geranylgeranyl diphosphate (GGPP) to the C3 hydroxyl of sn-glycerol-1-phosphate (G1P). This reaction is the first ether-bond-formation step in the biosynthesis of archaeal membrane lipids. In Hyperthermus butylicus (strain DSM 5456 / JCM 9403 / PLM1-5), this protein is Geranylgeranylglyceryl phosphate synthase.